A 228-amino-acid polypeptide reads, in one-letter code: Cytochrome c oxidase subunit 2 (228 aa).

Over 1–26 (MSQWFQLGLQNGNSPLMEQLIFFHDH) the chain is Mitochondrial intermembrane. A helical membrane pass occupies residues 27 to 48 (ALLVVILITSLVGFFLAALFSN). Topologically, residues 49 to 62 (KFLHRYLLDGQAIE) are mitochondrial matrix. A helical membrane pass occupies residues 63–82 (TVWTVIPAIILVAIALPSIR). Topologically, residues 83–228 (LLYLIDEIHN…FLKWLELQIS (146 aa)) are mitochondrial intermembrane. Positions 161, 196, 198, 200, 204, and 207 each coordinate Cu cation. E198 lines the Mg(2+) pocket.

Belongs to the cytochrome c oxidase subunit 2 family. As to quaternary structure, component of the cytochrome c oxidase (complex IV, CIV), a multisubunit enzyme composed of a catalytic core of 3 subunits and several supernumerary subunits. The complex exists as a monomer or a dimer and forms supercomplexes (SCs) in the inner mitochondrial membrane with ubiquinol-cytochrome c oxidoreductase (cytochrome b-c1 complex, complex III, CIII). The cofactor is Cu cation.

It localises to the mitochondrion inner membrane. The enzyme catalyses 4 Fe(II)-[cytochrome c] + O2 + 8 H(+)(in) = 4 Fe(III)-[cytochrome c] + 2 H2O + 4 H(+)(out). Component of the cytochrome c oxidase, the last enzyme in the mitochondrial electron transport chain which drives oxidative phosphorylation. The respiratory chain contains 3 multisubunit complexes succinate dehydrogenase (complex II, CII), ubiquinol-cytochrome c oxidoreductase (cytochrome b-c1 complex, complex III, CIII) and cytochrome c oxidase (complex IV, CIV), that cooperate to transfer electrons derived from NADH and succinate to molecular oxygen, creating an electrochemical gradient over the inner membrane that drives transmembrane transport and the ATP synthase. Cytochrome c oxidase is the component of the respiratory chain that catalyzes the reduction of oxygen to water. Electrons originating from reduced cytochrome c in the intermembrane space (IMS) are transferred via the dinuclear copper A center (CU(A)) of subunit 2 and heme A of subunit 1 to the active site in subunit 1, a binuclear center (BNC) formed by heme A3 and copper B (CU(B)). The BNC reduces molecular oxygen to 2 water molecules using 4 electrons from cytochrome c in the IMS and 4 protons from the mitochondrial matrix. The polypeptide is Cytochrome c oxidase subunit 2 (COII) (Artemia franciscana (Brine shrimp)).